We begin with the raw amino-acid sequence, 223 residues long: Urease accessory protein UreF (223 aa).

This sequence belongs to the UreF family. In terms of assembly, ureD, UreF and UreG form a complex that acts as a GTP-hydrolysis-dependent molecular chaperone, activating the urease apoprotein by helping to assemble the nickel containing metallocenter of UreC. The UreE protein probably delivers the nickel.

The protein localises to the cytoplasm. Required for maturation of urease via the functional incorporation of the urease nickel metallocenter. The protein is Urease accessory protein UreF of Rhizobium leguminosarum bv. trifolii (strain WSM2304).